A 381-amino-acid polypeptide reads, in one-letter code: MSYQWLEKALKTIHQANWYRSVTAITSLPGSTIEIDGNTFINFASNDYLGLAGDPRLIKAAVEATQQFGTGSTGSRLLSGHRELHQELETAIASLKQTEEALVFSSGYLANLGTITAIVGTRDLILGDQYNHSSLKNGSKLSSATVLEYDHCNSEDLQEKLQQHRHQYRRCLIITDSIFSMDGNACPLQKLLSLAADFDCMLLVDEAHATGVIGETGAGLVEHFGCSNQPLIMTGTLSKALGSLGGYVAGSRMLIDFLRNRAPTWIYTTGLSPADTSAALEAIKIMQNEPQRRKKLWDNVNYLKEKLCDFNLFTSDSPILCLGIETVEKALTLASQLKEKGIFVPAIRPPTVPTSRLRFSVMATHEETQLQQLVTTLNQLI.

Position 20 (Arg20) interacts with substrate. Pyridoxal 5'-phosphate is bound at residue 107-108; sequence GY. His132 contributes to the substrate binding site. Pyridoxal 5'-phosphate contacts are provided by residues Ser180, 205–208, and 236–239; these read DEAH and TLSK. The residue at position 239 (Lys239) is an N6-(pyridoxal phosphate)lysine. Residue Thr351 participates in substrate binding.

It belongs to the class-II pyridoxal-phosphate-dependent aminotransferase family. BioF subfamily. In terms of assembly, homodimer. The cofactor is pyridoxal 5'-phosphate.

The enzyme catalyses 6-carboxyhexanoyl-[ACP] + L-alanine + H(+) = (8S)-8-amino-7-oxononanoate + holo-[ACP] + CO2. The protein operates within cofactor biosynthesis; biotin biosynthesis. Its function is as follows. Catalyzes the decarboxylative condensation of pimeloyl-[acyl-carrier protein] and L-alanine to produce 8-amino-7-oxononanoate (AON), [acyl-carrier protein], and carbon dioxide. The polypeptide is Putative 8-amino-7-oxononanoate synthase (bioF) (Rippkaea orientalis (strain PCC 8801 / RF-1) (Cyanothece sp. (strain PCC 8801))).